The chain runs to 192 residues: tRNA (pseudouridine(54)-N(1))-methyltransferase (192 aa).

Leucine 127 and cysteine 181 together coordinate S-adenosyl-L-methionine.

Belongs to the methyltransferase superfamily. TrmY family. Homodimer.

The protein resides in the cytoplasm. The catalysed reaction is pseudouridine(54) in tRNA + S-adenosyl-L-methionine = N(1)-methylpseudouridine(54) in tRNA + S-adenosyl-L-homocysteine + H(+). Its function is as follows. Specifically catalyzes the N1-methylation of pseudouridine at position 54 (Psi54) in tRNAs. The chain is tRNA (pseudouridine(54)-N(1))-methyltransferase from Methanocella arvoryzae (strain DSM 22066 / NBRC 105507 / MRE50).